Consider the following 356-residue polypeptide: OVARIAN TUMOR DOMAIN-containing deubiquitinating enzyme 10 (356 aa).

The tract at residues 86-117 (DYSHQNQQQQHQQEGYTNNYSNNNNGYAWNDQ) is disordered. Residues 89–115 (HQNQQQQHQQEGYTNNYSNNNNGYAWN) are compositionally biased toward low complexity. The OTU domain occupies 213-337 (FTEVKVPGDG…EVHYNAIYLN (125 aa)). Asp221 is an active-site residue. The active-site Nucleophile is the Cys224. His330 is an active-site residue.

This sequence belongs to the peptidase C85 family.

The catalysed reaction is Thiol-dependent hydrolysis of ester, thioester, amide, peptide and isopeptide bonds formed by the C-terminal Gly of ubiquitin (a 76-residue protein attached to proteins as an intracellular targeting signal).. Functionally, hydrolase that can remove conjugated ubiquitin from proteins in vitro and may therefore play an important regulatory role at the level of protein turnover by preventing degradation. Cysteine protease with a preference for 'Lys-63' over 'Lys-48' over 'Met-1' -linked ubiquitin (UB) tetramers as substrates. Also cleaves RUB-GST fusion. The chain is OVARIAN TUMOR DOMAIN-containing deubiquitinating enzyme 10 from Arabidopsis thaliana (Mouse-ear cress).